Reading from the N-terminus, the 59-residue chain is Large ribosomal subunit protein bL32 (59 aa).

This sequence belongs to the bacterial ribosomal protein bL32 family.

In Mesoplasma florum (strain ATCC 33453 / NBRC 100688 / NCTC 11704 / L1) (Acholeplasma florum), this protein is Large ribosomal subunit protein bL32.